The sequence spans 122 residues: Large ribosomal subunit protein uL14 (122 aa).

This sequence belongs to the universal ribosomal protein uL14 family. In terms of assembly, part of the 50S ribosomal subunit. Forms a cluster with proteins L3 and L19. In the 70S ribosome, L14 and L19 interact and together make contacts with the 16S rRNA in bridges B5 and B8.

Its function is as follows. Binds to 23S rRNA. Forms part of two intersubunit bridges in the 70S ribosome. The chain is Large ribosomal subunit protein uL14 from Pseudothermotoga lettingae (strain ATCC BAA-301 / DSM 14385 / NBRC 107922 / TMO) (Thermotoga lettingae).